The chain runs to 396 residues: S100P-binding protein (396 aa).

A disordered region spans residues 145 to 249; it reads CDPVLDKDKI…RKNSGSHKSG (105 aa). Composition is skewed to basic and acidic residues over residues 148-161 and 168-185; these read VLDK…KETE and EQTR…RCTE. 2 stretches are compositionally biased toward polar residues: residues 202–215 and 227–246; these read SSPS…TASD and VFSQ…SGSH.

As to quaternary structure, interacts with S100P.

The protein resides in the nucleus. This Mus musculus (Mouse) protein is S100P-binding protein.